Consider the following 258-residue polypeptide: Protein U52 (258 aa).

This sequence belongs to the herpesviridae UL79 family.

The chain is Protein U52 (U52) from Human herpesvirus 6B (strain Z29) (HHV-6 variant B).